The chain runs to 151 residues: Phosphoribosyl-AMP cyclohydrolase (151 aa).

Positions 1–13 (MMTLTFASPPQNK) are enriched in polar residues. Residues 1–20 (MMTLTFASPPQNKSDLETGP) form a disordered region. Residue D93 participates in Mg(2+) binding. Position 94 (C94) interacts with Zn(2+). Positions 95 and 97 each coordinate Mg(2+). Zn(2+) contacts are provided by C112 and C119.

It belongs to the PRA-CH family. In terms of assembly, homodimer. The cofactor is Mg(2+). Requires Zn(2+) as cofactor.

The protein localises to the cytoplasm. It carries out the reaction 1-(5-phospho-beta-D-ribosyl)-5'-AMP + H2O = 1-(5-phospho-beta-D-ribosyl)-5-[(5-phospho-beta-D-ribosylamino)methylideneamino]imidazole-4-carboxamide. It functions in the pathway amino-acid biosynthesis; L-histidine biosynthesis; L-histidine from 5-phospho-alpha-D-ribose 1-diphosphate: step 3/9. In terms of biological role, catalyzes the hydrolysis of the adenine ring of phosphoribosyl-AMP. This chain is Phosphoribosyl-AMP cyclohydrolase, found in Sinorhizobium medicae (strain WSM419) (Ensifer medicae).